The sequence spans 959 residues: DEAD-box ATP-dependent RNA helicase rde-12 (959 aa).

Residues 1-336 (MSSFGNNAGG…EGVNAPVRAP (336 aa)) are disordered. Residues 71–97 (GRREDDRSHSRDNHGGSRYGERDDRGN) show a composition bias toward basic and acidic residues. Over residues 98-118 (NGRSADNRYSQSNYNYDSNRG) the composition is skewed to polar residues. A compositionally biased stretch (basic and acidic residues) spans 122 to 134 (YQRDNHGSKDDRG). A compositionally biased stretch (polar residues) spans 137–160 (NQYNDHGSNHNSNSRNDQYRQGSY). Composition is skewed to basic and acidic residues over residues 166–181 (SGYR…DNDQ) and 189–201 (RDSD…DHHN). A compositionally biased stretch (polar residues) spans 202 to 213 (YNSQSSPRSHQG). 2 stretches are compositionally biased toward basic and acidic residues: residues 219 to 239 (SAPK…HDSY) and 255 to 270 (YRND…DHRS). Residues 271–280 (GGNNSSSGFK) are compositionally biased toward low complexity. Gly residues predominate over residues 281 to 301 (NDGGFGGNDNRGFGNNGGGSF). A compositionally biased stretch (low complexity) spans 302–317 (GNPNNSYRGNSNNIGG). The short motif at 380–408 (TSWTNSGLHPTILETLKRIKYNNVRTIQG) is the Q motif element. The Helicase ATP-binding domain maps to 411-599 (IPQVLDGHDV…NELMKRLPGQ (189 aa)). Residue 424 to 431 (AETSAGKT) coordinates ATP. A DEAD box motif is present at residues 539–542 (DEAD). One can recognise a Helicase C-terminal domain in the interval 632–792 (KLREILKQNV…KVPDFLDAMA (161 aa)). 2 disordered regions span residues 793–834 (KSSR…GGGR) and 858–959 (GGGG…DDEW). Gly residues-rich tracts occupy residues 800–834 (GTSG…GGGR) and 858–872 (GGGG…GFGG). Over residues 930–941 (TLGSSTFGTANN) the composition is skewed to polar residues. The span at 942 to 959 (ADEEPTETGADGNDDDEW) shows a compositional bias: acidic residues.

The protein belongs to the DEAD box helicase family. DDX3/DED1 subfamily. Interacts with wago-1, ergo-1 and rde-1. It depends on Mg(2+) as a cofactor. Expressed in the soma and germline.

It localises to the cytoplasm. The protein resides in the perinuclear region. The protein localises to the cytoplasmic granule. Its subcellular location is the P-body. The catalysed reaction is ATP + H2O = ADP + phosphate + H(+). Its function is as follows. Probable ATP-dependent RNA helicase involved in RNAi-mediated gene silencing. Specifically required in the endogenous siRNA pathway for biogenesis of secondary endogenous small interfering RNA (siRNA) intermediates called 22G-RNAs. May associate with and recruit rde-10 to primary siRNA-targeted mRNA for secondary siRNA synthesis. May be recruited to target mRNAs by rde-1 and/or ergo-1. The polypeptide is DEAD-box ATP-dependent RNA helicase rde-12 (Caenorhabditis elegans).